The following is a 359-amino-acid chain: METQLSNGPTCNNTANGPTTVNNNCSSPVDSGNTEDSKTNLIDNYLPQNMTQEELKSLFGSIGEIESCKLVRDKITGQSLGYGFVNYIDPKDAEKAINTLNGLRLQTKTIKVSYARPSSASIRDANLYVSGLPKTMTQKELEQLFSQYGRIITSRILVDQVTGISRGVGFIRFDKRIEAEEAIKGLNGQKPPGATEPITVKFANNPSQKTNQAILSQLYQSPNRRYPGPLAQQAQRFRLDNLLNMAYGVKRFSPMTIDGMTSLAGINIPGHPGTGWCIFVYNLAPDADESILWQMFGPFGAVTNVKVIRDFNTNKCKGFGFVTMTNYDEAAMAIASLNGYRLGDRVLQVSFKTNKTHKA.

Residues 1-39 (METQLSNGPTCNNTANGPTTVNNNCSSPVDSGNTEDSKT) are disordered. RRM domains are found at residues 39–117 (TNLI…YARP) and 125–205 (ANLY…FANN). Residue Ser-221 is modified to Phosphoserine. In terms of domain architecture, RRM 3 spans 276-354 (WCIFVYNLAP…RVLQVSFKTN (79 aa)).

Belongs to the RRM elav family. Interacts with IGF2BP1. Interacts with MAP1B light chain LC1.

Functionally, RNA-binding protein that binds to the 3' untranslated region (3'UTR) of target mRNAs. Seems to recognize a GAAA motif. Can bind to its own 3'UTR, the FOS 3'UTR and the ID 3'UTR. The protein is ELAV-like protein 2 (Elavl2) of Rattus norvegicus (Rat).